A 390-amino-acid polypeptide reads, in one-letter code: Galactokinase (390 aa).

34 to 37 (EHTD) serves as a coordination point for substrate. ATP is bound by residues Ser68 and 122–128 (GSGLSSS). Residues Ser128 and Glu160 each contribute to the Mg(2+) site. Asp172 functions as the Proton acceptor in the catalytic mechanism. Tyr221 contacts substrate.

This sequence belongs to the GHMP kinase family. GalK subfamily.

Its subcellular location is the cytoplasm. The enzyme catalyses alpha-D-galactose + ATP = alpha-D-galactose 1-phosphate + ADP + H(+). Its pathway is carbohydrate metabolism; galactose metabolism. In terms of biological role, catalyzes the transfer of the gamma-phosphate of ATP to D-galactose to form alpha-D-galactose-1-phosphate (Gal-1-P). The sequence is that of Galactokinase from Chloroflexus aurantiacus (strain ATCC 29366 / DSM 635 / J-10-fl).